The primary structure comprises 581 residues: ATP-dependent RNA helicase DBP3 (581 aa).

The disordered stretch occupies residues 1–118; that stretch reads MAATKHSLAD…ASSNSEAPSS (118 aa). 2 stretches are compositionally biased toward basic and acidic residues: residues 7-35 and 53-62; these read SLADSEDRPTKKTKVDSEEKARLKAEKRE and DADRAAEKER. The segment covering 63–73 has biased composition (basic residues); the sequence is KKAKKAKKLEK. Composition is skewed to low complexity over residues 80–89 and 106–118; these read AEASAEPAAE and TTEASSNSEAPSS. The Q motif signature appears at 160–189; that stretch reads LEFHQLPATNLLEKKPSPFANYKAPTPIQS. Residues 192 to 365 enclose the Helicase ATP-binding domain; that stretch reads WPFTLSGRDV…ATFMVSPVKI (174 aa). An ATP-binding site is contributed by 205–212; that stretch reads AETGSGKT. Positions 311-314 match the DEAD box motif; it reads DEAD. The region spanning 402-551 is the Helicase C-terminal domain; that stretch reads RLLEVLKEHQ…PVPEDLLKFG (150 aa).

It belongs to the DEAD box helicase family. DDX5/DBP2 subfamily.

Its subcellular location is the nucleus. The protein resides in the nucleolus. It carries out the reaction ATP + H2O = ADP + phosphate + H(+). ATP-dependent RNA helicase required for 60S ribosomal subunit synthesis. Involved in efficient pre-rRNA processing, predominantly at site A3, which is necessary for the normal formation of 25S and 5.8S rRNAs. This is ATP-dependent RNA helicase DBP3 (DBP3) from Gibberella zeae (strain ATCC MYA-4620 / CBS 123657 / FGSC 9075 / NRRL 31084 / PH-1) (Wheat head blight fungus).